Here is a 495-residue protein sequence, read N- to C-terminus: Leucine aminopeptidase 2 (495 aa).

An N-terminal signal peptide occupies residues 1-21 (MKSQLLSLAVAVTTISQGVVG). A PA domain is found at 124 to 218 (PPASKIMAEL…EDGKNLATLV (95 aa)). N-linked (GlcNAc...) asparagine glycans are attached at residues Asn-142 and Asn-235. Residues His-259 and Asp-271 each coordinate Zn(2+). N-linked (GlcNAc...) asparagine glycosylation is present at Asn-272. Catalysis depends on Glu-303, which acts as the Proton acceptor. 2 residues coordinate Zn(2+): Glu-304 and Asp-332. A glycan (N-linked (GlcNAc...) asparagine) is linked at Asn-352. His-430 serves as a coordination point for Zn(2+).

The protein belongs to the peptidase M28 family. M28A subfamily. As to quaternary structure, monomer. Zn(2+) is required as a cofactor.

It is found in the secreted. Activity is inhibited by EDTA, o-phenanthroline, bestatin and amastatin. In terms of biological role, extracellular aminopeptidase that releases a wide variety of amino acids from natural peptides and contributes to pathogenicity. In Trichophyton rubrum (Athlete's foot fungus), this protein is Leucine aminopeptidase 2 (LAP2).